A 1756-amino-acid polypeptide reads, in one-letter code: RANBP2-like and GRIP domain-containing protein 2 (1756 aa).

The residue at position 21 (Ser21) is a Phosphoserine. 3 TPR repeats span residues 59 to 92 (PRAHRFLGLLYELEENTEKAVECYRRSLELNPPQ), 583 to 616 (QKMGRGLNSSYDQQEYIGRSVHYWKKVLPLLKII), and 647 to 680 (EDAHITFAILDAVHGNIEDAVTAFESIKSVVSYW). The segment at 759 to 804 (GPLYKNGSLRNADSEIKHSTPSPTKYSLSPSKSYKYSPKTPPRWAE) is disordered. Residues 777 to 796 (STPSPTKYSLSPSKSYKYSP) show a composition bias toward low complexity. A RanBD1 1 domain is found at 1029–1165 (HFEPVVQMPE…FEECQRLLLD (137 aa)). 2 disordered regions span residues 1206–1241 (TKVTEEENKGSGTGAAGASDTTIKPNPENTGPTLEW) and 1299–1324 (AKLNQSGTSVGTDEESDVTQEEERDG). Residues 1228–1237 (IKPNPENTGP) are compositionally biased toward polar residues. The segment covering 1310–1322 (TDEESDVTQEEER) has biased composition (acidic residues). The RanBD1 2 domain maps to 1326-1462 (YFEPVVPLPD…FDEAKTAQEK (137 aa)). Residues 1573-1586 (NDSETSSVAQSGSE) show a composition bias toward polar residues. The tract at residues 1573 to 1614 (NDSETSSVAQSGSESKVEPKKCELSKNSDIEQSSDSKVKNLS) is disordered. Positions 1587 to 1610 (SKVEPKKCELSKNSDIEQSSDSKV) are enriched in basic and acidic residues. One can recognise a GRIP domain in the interval 1693-1743 (QEESAANVEHLKNVLLQFIFLKPGSERESLLPVINTMLQLSPEEKGKLAAV).

The protein is RANBP2-like and GRIP domain-containing protein 2 (RGPD2) of Homo sapiens (Human).